Reading from the N-terminus, the 727-residue chain is Pollen-specific leucine-rich repeat extensin-like protein 3 (727 aa).

The N-terminal stretch at 1–22 is a signal peptide; that stretch reads MPHIYKQPLGIFQGFVPTLTDA. An LRR 1 repeat occupies 19–43; the sequence is LTDAEVSFIAQRQLLTLPENGELPD. N80 is a glycosylation site (N-linked (GlcNAc...) asparagine). LRR repeat units follow at residues 107–131, 132–154, 156–179, 180–202, 203–226, 228–249, 250–273, 275–296, and 297–321; these read VAVV…LGLM, TDVA…SFEK, SLMH…VLSW, PAVK…ELFK, KDLD…LGES, ASVV…IGNM, KNLN…IGKL, NVNV…SFVG, and LTSM…ICKL. Residue N326 is glycosylated (N-linked (GlcNAc...) asparagine). The tract at residues 381–727 is disordered; that stretch reads SKDKCAGGSS…SPPPPMFQGY (347 aa). Composition is skewed to pro residues over residues 397–419, 446–457, 466–479, 492–677, and 718–727; these read SPSP…PQPN, SPPPASSPPTSP, VHKP…PQPN, SPPP…PKMS, and SPPPPMFQGY. Residues 432–727 form a contains the Ser-Pro(4) repeats region; it reads SPPPPQQPHH…SPPPPMFQGY (296 aa).

In terms of processing, hydroxylated on proline residues in the S-P-P-P-P repeat. Post-translationally, O-glycosylated on hydroxyprolines. As to expression, expressed in flowers, stamen, pollen, and pollinated carpels.

It is found in the secreted. The protein localises to the cell wall. Modulates cell morphogenesis by regulating cell wall formation and assembly, and/or growth polarization. This chain is Pollen-specific leucine-rich repeat extensin-like protein 3 (PEX3), found in Arabidopsis thaliana (Mouse-ear cress).